Reading from the N-terminus, the 274-residue chain is Thiamine kinase (274 aa).

It belongs to the thiamine kinase family.

The catalysed reaction is thiamine + ATP = thiamine phosphate + ADP + H(+). It functions in the pathway cofactor biosynthesis; thiamine diphosphate biosynthesis; thiamine phosphate from thiamine: step 1/1. Its function is as follows. Catalyzes the ATP-dependent phosphorylation of thiamine to thiamine phosphate. Is involved in thiamine salvage. This chain is Thiamine kinase, found in Shigella dysenteriae serotype 1 (strain Sd197).